Reading from the N-terminus, the 228-residue chain is 7-cyano-7-deazaguanine synthase (228 aa).

An ATP-binding site is contributed by 7–17; sequence LSGGLDSAVNL. Positions 192, 200, 203, and 206 each coordinate Zn(2+).

It belongs to the QueC family. As to quaternary structure, homodimer. It depends on Zn(2+) as a cofactor.

The enzyme catalyses 7-carboxy-7-deazaguanine + NH4(+) + ATP = 7-cyano-7-deazaguanine + ADP + phosphate + H2O + H(+). Its pathway is purine metabolism; 7-cyano-7-deazaguanine biosynthesis. Catalyzes the ATP-dependent conversion of 7-carboxy-7-deazaguanine (CDG) to 7-cyano-7-deazaguanine (preQ(0)). This Desulforamulus reducens (strain ATCC BAA-1160 / DSM 100696 / MI-1) (Desulfotomaculum reducens) protein is 7-cyano-7-deazaguanine synthase.